The following is a 90-amino-acid chain: Probable Fe(2+)-trafficking protein (90 aa).

This sequence belongs to the Fe(2+)-trafficking protein family.

In terms of biological role, could be a mediator in iron transactions between iron acquisition and iron-requiring processes, such as synthesis and/or repair of Fe-S clusters in biosynthetic enzymes. This chain is Probable Fe(2+)-trafficking protein, found in Vibrio parahaemolyticus serotype O3:K6 (strain RIMD 2210633).